The primary structure comprises 452 residues: Pup--protein ligase (452 aa).

Glu-9 is a binding site for Mg(2+). Residue Arg-53 coordinates ATP. Residue Tyr-55 coordinates Mg(2+). Catalysis depends on Asp-57, which acts as the Proton acceptor. A Mg(2+)-binding site is contributed by Glu-63. 2 residues coordinate ATP: Thr-66 and Trp-419.

It belongs to the Pup ligase/Pup deamidase family. Pup-conjugating enzyme subfamily. In terms of processing, pupylated at an undetermined lysine residue by the prokaryotic ubiquitin-like protein Pup, which leads to its degradation by the proteasome and thereby constitutes a negative auto-regulation.

The catalysed reaction is ATP + [prokaryotic ubiquitin-like protein]-L-glutamate + [protein]-L-lysine = ADP + phosphate + N(6)-([prokaryotic ubiquitin-like protein]-gamma-L-glutamyl)-[protein]-L-lysine.. Its pathway is protein degradation; proteasomal Pup-dependent pathway. It participates in protein modification; protein pupylation. Catalyzes the covalent attachment of the prokaryotic ubiquitin-like protein modifier Pup to the proteasomal substrate proteins, thereby targeting them for proteasomal degradation. This tagging system is termed pupylation. The ligation reaction likely involves the side-chain carboxylate of the C-terminal glutamate of Pup and the side-chain amino group of a substrate lysine. The polypeptide is Pup--protein ligase (pafA) (Mycolicibacterium smegmatis (strain ATCC 700084 / mc(2)155) (Mycobacterium smegmatis)).